Here is a 116-residue protein sequence, read N- to C-terminus: Large ribosomal subunit protein bL17 (116 aa).

Belongs to the bacterial ribosomal protein bL17 family. In terms of assembly, part of the 50S ribosomal subunit. Contacts protein L32.

The protein is Large ribosomal subunit protein bL17 of Acaryochloris marina (strain MBIC 11017).